We begin with the raw amino-acid sequence, 276 residues long: Nickel import system permease protein NikC (276 aa).

The next 5 helical transmembrane spans lie at 10 to 30 (LIFF…FFVS), 73 to 93 (LFVT…LGLF), 108 to 128 (FIDV…ASFF), 186 to 206 (IIPA…LYIS), and 238 to 258 (IMLI…NLTG). The ABC transmembrane type-1 domain maps to 69-258 (ARSTLFVTVL…ITILIFNLTG (190 aa)).

It belongs to the binding-protein-dependent transport system permease family. OppBC subfamily. The complex is composed of two ATP-binding proteins (NikD and NikE), two transmembrane proteins (NikB and NikC) and a solute-binding protein (NikA).

The protein localises to the cell membrane. Its function is as follows. Part of the ABC transporter complex NikABCDE (Opp2) involved in nickel import. Probably responsible for the translocation of the substrate across the membrane. The chain is Nickel import system permease protein NikC from Staphylococcus aureus (strain USA300).